Here is a 480-residue protein sequence, read N- to C-terminus: Glutamate--tRNA ligase (480 aa).

The short motif at 9-19 is the 'HIGH' region element; sequence PSPTGNLHIGT. A 'KMSKS' region motif is present at residues 250–254; it reads KLSKR. ATP is bound at residue Lys253.

The protein belongs to the class-I aminoacyl-tRNA synthetase family. Glutamate--tRNA ligase type 1 subfamily. As to quaternary structure, monomer.

It localises to the cytoplasm. It catalyses the reaction tRNA(Glu) + L-glutamate + ATP = L-glutamyl-tRNA(Glu) + AMP + diphosphate. Its function is as follows. Catalyzes the attachment of glutamate to tRNA(Glu) in a two-step reaction: glutamate is first activated by ATP to form Glu-AMP and then transferred to the acceptor end of tRNA(Glu). In Microcystis aeruginosa (strain NIES-843 / IAM M-2473), this protein is Glutamate--tRNA ligase.